The following is a 193-amino-acid chain: Holliday junction branch migration complex subunit RuvA (193 aa).

The interval Met-1–Leu-64 is domain I. Positions Thr-65–Leu-139 are domain II. Residues Leu-139 to Ala-143 form a flexible linker region. The tract at residues Ser-144 to Ala-193 is domain III.

Belongs to the RuvA family. As to quaternary structure, homotetramer. Forms an RuvA(8)-RuvB(12)-Holliday junction (HJ) complex. HJ DNA is sandwiched between 2 RuvA tetramers; dsDNA enters through RuvA and exits via RuvB. An RuvB hexamer assembles on each DNA strand where it exits the tetramer. Each RuvB hexamer is contacted by two RuvA subunits (via domain III) on 2 adjacent RuvB subunits; this complex drives branch migration. In the full resolvosome a probable DNA-RuvA(4)-RuvB(12)-RuvC(2) complex forms which resolves the HJ.

The protein localises to the cytoplasm. The RuvA-RuvB-RuvC complex processes Holliday junction (HJ) DNA during genetic recombination and DNA repair, while the RuvA-RuvB complex plays an important role in the rescue of blocked DNA replication forks via replication fork reversal (RFR). RuvA specifically binds to HJ cruciform DNA, conferring on it an open structure. The RuvB hexamer acts as an ATP-dependent pump, pulling dsDNA into and through the RuvAB complex. HJ branch migration allows RuvC to scan DNA until it finds its consensus sequence, where it cleaves and resolves the cruciform DNA. The sequence is that of Holliday junction branch migration complex subunit RuvA from Burkholderia thailandensis (strain ATCC 700388 / DSM 13276 / CCUG 48851 / CIP 106301 / E264).